We begin with the raw amino-acid sequence, 146 residues long: Large ribosomal subunit protein uL15 (146 aa).

Composition is skewed to basic residues over residues 1-13 (MIRK…RMRG) and 22-38 (SKKR…GQAG). The tract at residues 1–38 (MIRKRRKITRMRGSRTVGGGCSKKRRGAGHRGGRGQAG) is disordered.

Belongs to the universal ribosomal protein uL15 family. In terms of assembly, part of the 50S ribosomal subunit.

In terms of biological role, binds to the 23S rRNA. The polypeptide is Large ribosomal subunit protein uL15 (Methanothermobacter thermautotrophicus (strain ATCC 29096 / DSM 1053 / JCM 10044 / NBRC 100330 / Delta H) (Methanobacterium thermoautotrophicum)).